The sequence spans 256 residues: 5'-nucleotidase SurE (256 aa).

4 residues coordinate a divalent metal cation: Asp-8, Asp-9, Ser-40, and Asn-92.

It belongs to the SurE nucleotidase family. Requires a divalent metal cation as cofactor.

The protein resides in the cytoplasm. It catalyses the reaction a ribonucleoside 5'-phosphate + H2O = a ribonucleoside + phosphate. In terms of biological role, nucleotidase that shows phosphatase activity on nucleoside 5'-monophosphates. The chain is 5'-nucleotidase SurE from Allorhizobium ampelinum (strain ATCC BAA-846 / DSM 112012 / S4) (Agrobacterium vitis (strain S4)).